Reading from the N-terminus, the 440-residue chain is Streptokinase G (440 aa).

An N-terminal signal peptide occupies residues 1 to 26 (MKNYLSFGMFALLFALTFGTVNSVQA).

In terms of biological role, this protein is not a protease, but it activates plasminogen by complexing with it. As a potential virulence factor, it is thought to prevent the formation of effective fibrin barriers around the site of infection, thereby contributing to the invasiveness of the cells. In Streptococcus sp. (strain 19909), this protein is Streptokinase G (skg).